A 270-amino-acid chain; its full sequence is L-aspartate dehydrogenase (270 aa).

Positions 123 and 191 each coordinate NAD(+). His221 is a catalytic residue.

The protein belongs to the L-aspartate dehydrogenase family.

The enzyme catalyses L-aspartate + NADP(+) + H2O = oxaloacetate + NH4(+) + NADPH + H(+). It carries out the reaction L-aspartate + NAD(+) + H2O = oxaloacetate + NH4(+) + NADH + H(+). Its pathway is cofactor biosynthesis; NAD(+) biosynthesis; iminoaspartate from L-aspartate (dehydrogenase route): step 1/1. Functionally, specifically catalyzes the NAD or NADP-dependent dehydrogenation of L-aspartate to iminoaspartate. The protein is L-aspartate dehydrogenase of Methanocella arvoryzae (strain DSM 22066 / NBRC 105507 / MRE50).